The chain runs to 348 residues: Phenylalanine--tRNA ligase alpha subunit (348 aa).

Mg(2+) is bound at residue E259.

This sequence belongs to the class-II aminoacyl-tRNA synthetase family. Phe-tRNA synthetase alpha subunit type 1 subfamily. Tetramer of two alpha and two beta subunits. It depends on Mg(2+) as a cofactor.

The protein localises to the cytoplasm. The catalysed reaction is tRNA(Phe) + L-phenylalanine + ATP = L-phenylalanyl-tRNA(Phe) + AMP + diphosphate + H(+). This is Phenylalanine--tRNA ligase alpha subunit from Lacticaseibacillus casei (strain BL23) (Lactobacillus casei).